A 541-amino-acid polypeptide reads, in one-letter code: Chaperonin GroEL 2 (541 aa).

ATP contacts are provided by residues 29–32 and 86–90; these read TLGP and DGTTT. Lysine 132 is covalently cross-linked (Isoglutamyl lysine isopeptide (Lys-Gln) (interchain with Q-Cter in protein Pup)). ATP-binding positions include glycine 413, 476–478, and aspartate 492; that span reads NAA.

The protein belongs to the chaperonin (HSP60) family. In terms of assembly, forms a cylinder of 14 subunits composed of two heptameric rings stacked back-to-back. Interacts with the co-chaperonin GroES.

It is found in the secreted. The protein resides in the capsule. It localises to the cell surface. The protein localises to the cell wall. It catalyses the reaction ATP + H2O + a folded polypeptide = ADP + phosphate + an unfolded polypeptide.. Together with its co-chaperonin GroES, plays an essential role in assisting protein folding. The GroEL-GroES system forms a nano-cage that allows encapsulation of the non-native substrate proteins and provides a physical environment optimized to promote and accelerate protein folding. This chain is Chaperonin GroEL 2, found in Mycolicibacterium smegmatis (strain ATCC 700084 / mc(2)155) (Mycobacterium smegmatis).